The chain runs to 72 residues: Bradykinin-potentiating peptide BmKbpp (72 aa).

The first 22 residues, 1–22 (MNKKTLLVIFFVTMLIVDEVNS), serve as a signal peptide directing secretion. A propeptide spanning residues 70–72 (RRR) is cleaved from the precursor.

Belongs to the non-disulfide-bridged peptide (NDBP) superfamily. Long chain multifunctional peptide (group 2) family. In terms of tissue distribution, expressed by the venom gland.

It localises to the secreted. Its function is as follows. Amphipathic peptide that shows bradykinin potentiating activity and antimicrobial activities against bacteria and fungi. Has higher antibacterial activities against Gram-negative than against Gram-positive bacteria. Also inhibits NADPH oxidase-dependent superoxide production (IC(50) is 0.4 uM on granulocytes stimulated with PMA, IC(50) is 0.51 uM on HL-60 cells undifferentiated and IC(50) is 0.53 uM on HL-60 cells treated with DMSO). The C-terminal peptide shows a higher bradykinin potentiating activity than the complete peptide. In Olivierus martensii (Manchurian scorpion), this protein is Bradykinin-potentiating peptide BmKbpp.